A 249-amino-acid chain; its full sequence is Small ribosomal subunit protein eS6 (249 aa).

Residues L223–A238 show a composition bias toward basic residues. Residues L223–K249 are disordered.

It belongs to the eukaryotic ribosomal protein eS6 family. Component of the small ribosomal subunit. Part of the small subunit (SSU) processome, composed of more than 70 proteins and the RNA chaperone small nucleolar RNA (snoRNA) U3. Ribosomal protein S6 is the major substrate of protein kinases in eukaryote ribosomes.

Its subcellular location is the cytoplasm. The protein resides in the nucleus. The protein localises to the nucleolus. Its function is as follows. Component of the 40S small ribosomal subunit. Plays an important role in controlling cell growth and proliferation through the selective translation of particular classes of mRNA. Part of the small subunit (SSU) processome, first precursor of the small eukaryotic ribosomal subunit. During the assembly of the SSU processome in the nucleolus, many ribosome biogenesis factors, an RNA chaperone and ribosomal proteins associate with the nascent pre-rRNA and work in concert to generate RNA folding, modifications, rearrangements and cleavage as well as targeted degradation of pre-ribosomal RNA by the RNA exosome. This chain is Small ribosomal subunit protein eS6 (RPS6), found in Leishmania infantum.